The primary structure comprises 162 residues: NADH-quinone oxidoreductase subunit I (162 aa).

4Fe-4S ferredoxin-type domains are found at residues 53–83 (LRRY…IDSA) and 93–122 (TRYD…ETHI). [4Fe-4S] cluster-binding residues include C63, C66, C69, C73, C102, C105, C108, and C112.

This sequence belongs to the complex I 23 kDa subunit family. As to quaternary structure, NDH-1 is composed of 14 different subunits. Subunits NuoA, H, J, K, L, M, N constitute the membrane sector of the complex. It depends on [4Fe-4S] cluster as a cofactor.

The protein localises to the cell inner membrane. It catalyses the reaction a quinone + NADH + 5 H(+)(in) = a quinol + NAD(+) + 4 H(+)(out). Its function is as follows. NDH-1 shuttles electrons from NADH, via FMN and iron-sulfur (Fe-S) centers, to quinones in the respiratory chain. The immediate electron acceptor for the enzyme in this species is believed to be ubiquinone. Couples the redox reaction to proton translocation (for every two electrons transferred, four hydrogen ions are translocated across the cytoplasmic membrane), and thus conserves the redox energy in a proton gradient. The polypeptide is NADH-quinone oxidoreductase subunit I (Xanthomonas oryzae pv. oryzae (strain MAFF 311018)).